Here is a 364-residue protein sequence, read N- to C-terminus: tRNA 2-selenouridine synthase (364 aa).

Positions phenylalanine 12–glutamate 135 constitute a Rhodanese domain. The active-site S-selanylcysteine intermediate is the cysteine 95.

The protein belongs to the SelU family. As to quaternary structure, monomer.

It catalyses the reaction 5-methylaminomethyl-2-thiouridine(34) in tRNA + selenophosphate + (2E)-geranyl diphosphate + H2O + H(+) = 5-methylaminomethyl-2-selenouridine(34) in tRNA + (2E)-thiogeraniol + phosphate + diphosphate. The enzyme catalyses 5-methylaminomethyl-2-thiouridine(34) in tRNA + (2E)-geranyl diphosphate = 5-methylaminomethyl-S-(2E)-geranyl-thiouridine(34) in tRNA + diphosphate. It carries out the reaction 5-methylaminomethyl-S-(2E)-geranyl-thiouridine(34) in tRNA + selenophosphate + H(+) = 5-methylaminomethyl-2-(Se-phospho)selenouridine(34) in tRNA + (2E)-thiogeraniol. The catalysed reaction is 5-methylaminomethyl-2-(Se-phospho)selenouridine(34) in tRNA + H2O = 5-methylaminomethyl-2-selenouridine(34) in tRNA + phosphate. Functionally, involved in the post-transcriptional modification of the uridine at the wobble position (U34) of tRNA(Lys), tRNA(Glu) and tRNA(Gln). Catalyzes the conversion of 2-thiouridine (S2U-RNA) to 2-selenouridine (Se2U-RNA). Acts in a two-step process involving geranylation of 2-thiouridine (S2U) to S-geranyl-2-thiouridine (geS2U) and subsequent selenation of the latter derivative to 2-selenouridine (Se2U) in the tRNA chain. This is tRNA 2-selenouridine synthase from Pseudomonas fluorescens (strain ATCC BAA-477 / NRRL B-23932 / Pf-5).